Here is a 930-residue protein sequence, read N- to C-terminus: F-box only protein 11 (930 aa).

Positions 1-150 are disordered; that stretch reads MNSVRAANRR…RVSGKSQDLS (150 aa). Basic residues predominate over residues 7-16; that stretch reads ANRRPRRVSR. Over residues 17–27 the composition is skewed to low complexity; the sequence is PRPVQQQQQQP. A compositionally biased stretch (pro residues) spans 28-73; it reads PQQPPPQPPQQQPPPQPPQQPPQQQPPPPPQQQPPPPPPPPPPPPQ. The segment covering 117-132 has biased composition (polar residues); that stretch reads PTKSSMEGASTSTTEN. An F-box domain is found at 156 to 202; the sequence is QYLQEKLPDEVVLKIFSYLLEQDLCRAACVCKRFSELANDPILWKRL. 19 PbH1 repeats span residues 398–420, 421–443, 444–466, 467–489, 490–512, 513–535, 536–558, 559–581, 582–604, 605–627, 628–650, 651–673, 674–696, 697–719, 720–742, 743–765, 766–788, 789–811, and 812–833; these read GACP…YITD, HAQG…WVKN, HGNP…FTFD, HGMG…EVKA, YANP…YVHE, KGRG…WITS, NSDP…YIFG, DGRG…QIRT, NSCP…YVHE, KGQG…WVTT, GSTP…YFYD, NGHG…QIRT, GSNP…LVYN, SGLG…WIKT, DSNP…CIFN, GGRG…LIST, NSHP…EITN, HATA…FLAS, and GVNV…EKAV. A UBR-type zinc finger spans residues 836–907; it reads GQCLYKISSY…LSNPCTLAGE (72 aa).

Component of the SCF(FBXO11) complex consisting of CUL1, RBX1, SKP1 and FBXO11. Interacts with CIITA. In terms of tissue distribution, at 9.5 dpc and 10.5 dpc, expression is restricted to developing heart tissue. By 11.5 dpc and 12.5 dpc, detected in liver and subsequently in muscle by 13.5 dpc. At 14.5 dpc, still detected in heart, liver and muscle and also in the developing secondary palate including the nasal, medial and oral epithelia of the palatal shelves. At 15.5 dpc and 16.5 dpc, expressed in lung, kidney, heart, liver, muscle and adrenal gland. At this time, fusion of the palate shelves has occurred, with expression confined to the nasal and oral epithelia. At 17.5 dpc, expression in the lung is confined to bronchial epithelial cells and is evident in bone marrow, skin, tissue macrophages, osteoblasts, kidney, liver and spleen. At 18.5 dpc, expressed in bone marrow, liver, kidney and muscle but decreases in heart and lung. At this time, first detected in the middle ear epithelium. At the newborn stage, expression is strong in the middle ear where it is confined to mucin-secreting cells, as well as persisting in bone marrow, kidney and liver. Middle ear expression persists in postnatal head tissue at 4 and 13 days after birth and has declined by 21 days after birth. In the adult, expression is seen in alveolar macrophages of the lung, glomeruli and collecting tubules of the kidney, midbrain, heart and muscle.

It localises to the nucleus. The protein resides in the chromosome. It functions in the pathway protein modification; protein ubiquitination. Its function is as follows. Substrate recognition component of a SCF (SKP1-CUL1-F-box protein) E3 ubiquitin-protein ligase complex which mediates the ubiquitination and subsequent proteasomal degradation of target proteins, such as DTL/CDT2, BCL6, SNAI1 and PRDM1/BLIMP1. The SCF(FBXO11) complex mediates ubiquitination and degradation of BCL6, thereby playing a role in the germinal center B-cells terminal differentiation toward memory B-cells and plasma cells. The SCF(FBXO11) complex also mediates ubiquitination and degradation of DTL, an important step for the regulation of TGF-beta signaling, cell migration and the timing of the cell-cycle progression and exit. The SCF(FBXO11) complex also catalyzes ubiquitination and degradation of GSK3B-phosphorylated SNAI1. Binds to and neddylates phosphorylated p53/TP53, inhibiting its transcriptional activity. Plays a role in the regulatiom of erythropoiesis but not myelopoiesis or megakaryopoiesis. Mechanistically, activates erythroid genes by mediating the degradation of BAHD1, a heterochromatin-associated protein that recruits corepressors to H3K27me3 marks. Participates in macrophage cell death and inflammation in response to bacterial toxins by regulating the expression of complement 5a receptor 1/C5AR1 and IL-1beta. Acts as a critical regulator to determine the level of MHC-II by mediating the recognition of degron at the P/S/T domain of CIITA leading to its ubiquitination and subsequent degradation via the proteasome. Participates in the antiviral repsonse by initiating the activation of TBK1-IRF3-IFN-I axis. Mediates the 'Lys-63'-linked ubiquitination of TRAF3 to strengthen the interaction between TRAF3 and TBK1. This chain is F-box only protein 11, found in Mus musculus (Mouse).